Reading from the N-terminus, the 120-residue chain is Large ribosomal subunit protein eL18 (120 aa).

The protein belongs to the eukaryotic ribosomal protein eL18 family. In terms of assembly, part of the 50S ribosomal subunit.

The protein is Large ribosomal subunit protein eL18 of Pyrococcus furiosus (strain ATCC 43587 / DSM 3638 / JCM 8422 / Vc1).